Here is a 197-residue protein sequence, read N- to C-terminus: Small ribosomal subunit protein uS7 (197 aa).

It belongs to the universal ribosomal protein uS7 family.

The polypeptide is Small ribosomal subunit protein uS7 (RPS5) (Cicer arietinum (Chickpea)).